The sequence spans 103 residues: Small ribosomal subunit protein uS10 (103 aa).

The protein belongs to the universal ribosomal protein uS10 family. As to quaternary structure, part of the 30S ribosomal subunit.

Its function is as follows. Involved in the binding of tRNA to the ribosomes. The sequence is that of Small ribosomal subunit protein uS10 from Verminephrobacter eiseniae (strain EF01-2).